The primary structure comprises 453 residues: Histidine--tRNA ligase (453 aa).

It belongs to the class-II aminoacyl-tRNA synthetase family. Homodimer.

Its subcellular location is the cytoplasm. It carries out the reaction tRNA(His) + L-histidine + ATP = L-histidyl-tRNA(His) + AMP + diphosphate + H(+). This Cytophaga hutchinsonii (strain ATCC 33406 / DSM 1761 / CIP 103989 / NBRC 15051 / NCIMB 9469 / D465) protein is Histidine--tRNA ligase.